A 37-amino-acid chain; its full sequence is Cytochrome b6-f complex subunit 5 (37 aa).

A helical transmembrane segment spans residues 5-25; that stretch reads LLSGIVLGLVPVTIAGLFVTA.

Belongs to the PetG family. The 4 large subunits of the cytochrome b6-f complex are cytochrome b6, subunit IV (17 kDa polypeptide, PetD), cytochrome f and the Rieske protein, while the 4 small subunits are PetG, PetL, PetM and PetN. The complex functions as a dimer.

The protein resides in the plastid. It localises to the chloroplast thylakoid membrane. In terms of biological role, component of the cytochrome b6-f complex, which mediates electron transfer between photosystem II (PSII) and photosystem I (PSI), cyclic electron flow around PSI, and state transitions. PetG is required for either the stability or assembly of the cytochrome b6-f complex. The protein is Cytochrome b6-f complex subunit 5 of Chlamydomonas moewusii (Chlamydomonas eugametos).